We begin with the raw amino-acid sequence, 73 residues long: Neutrophil elastase 2B (73 aa).

The Peptidase S1 domain maps to 1–73 (IVGGRPARPH…SGGPLVCNGL (73 aa)). S64 acts as the Charge relay system in catalysis.

This sequence belongs to the peptidase S1 family. Elastase subfamily.

Its function is as follows. May be involved in the degradation of connective tissue in chronic lung disease. This Equus caballus (Horse) protein is Neutrophil elastase 2B.